The chain runs to 77 residues: Exodeoxyribonuclease 7 small subunit (77 aa).

This sequence belongs to the XseB family. As to quaternary structure, heterooligomer composed of large and small subunits.

The protein resides in the cytoplasm. It carries out the reaction Exonucleolytic cleavage in either 5'- to 3'- or 3'- to 5'-direction to yield nucleoside 5'-phosphates.. Its function is as follows. Bidirectionally degrades single-stranded DNA into large acid-insoluble oligonucleotides, which are then degraded further into small acid-soluble oligonucleotides. The protein is Exodeoxyribonuclease 7 small subunit of Clostridium acetobutylicum (strain ATCC 824 / DSM 792 / JCM 1419 / IAM 19013 / LMG 5710 / NBRC 13948 / NRRL B-527 / VKM B-1787 / 2291 / W).